The sequence spans 399 residues: Argonaute-binding protein 1 (399 aa).

As to quaternary structure, component of the argonaute siRNA chaperone (ARC) complex composed of ago1, arb1 and arb2. Interacts with ago1.

It is found in the nucleus. The protein localises to the cytoplasm. Functionally, component of the argonaute siRNA chaperone (ARC) complex which is required for histone H3K9 methylation, heterochromatin assembly and siRNA generation. The ARC complex contains mostly double-stranded siRNA. Inhibits the release of the siRNA passenger strand from ago1 together with arb2. Inhibits the slicer activity of ago1. Required for swi6 localization to the centromeric repeats. In Schizosaccharomyces pombe (strain 972 / ATCC 24843) (Fission yeast), this protein is Argonaute-binding protein 1 (arb1).